Reading from the N-terminus, the 131-residue chain is Large-conductance mechanosensitive channel (131 aa).

The next 3 membrane-spanning stretches (helical) occupy residues 8-28 (FALK…GAFG), 30-50 (IVTS…VGGI), and 72-92 (GQFI…FMFI).

The protein belongs to the MscL family. As to quaternary structure, homopentamer.

The protein resides in the cell membrane. Its function is as follows. Channel that opens in response to stretch forces in the membrane lipid bilayer. May participate in the regulation of osmotic pressure changes within the cell. This Alkaliphilus oremlandii (strain OhILAs) (Clostridium oremlandii (strain OhILAs)) protein is Large-conductance mechanosensitive channel.